Here is a 258-residue protein sequence, read N- to C-terminus: Chymotrypsin-like elastase family member 1 (258 aa).

An N-terminal signal peptide occupies residues 1-8 (MLVLYGHS). A propeptide spans 9-18 (TQDVPETNAR) (activation peptide). A Peptidase S1 domain is found at 19-256 (VVGGTEARRN…YITWINNVIA (238 aa)). Residues Cys48 and Cys64 are joined by a disulfide bond. His63 acts as the Charge relay system in catalysis. The Ca(2+) site is built by Glu77, Asn79, Gln82, and Glu87. Residue Asn79 is glycosylated (N-linked (GlcNAc...) asparagine). Asp111 acts as the Charge relay system in catalysis. Cystine bridges form between Cys145–Cys212, Cys176–Cys192, and Cys202–Cys232. Catalysis depends on Ser206, which acts as the Charge relay system. A glycan (N-linked (GlcNAc...) asparagine) is linked at Asn233.

Belongs to the peptidase S1 family. Elastase subfamily. Requires Ca(2+) as cofactor.

The protein resides in the secreted. It catalyses the reaction Hydrolysis of proteins, including elastin. Preferential cleavage: Ala-|-Xaa.. Its function is as follows. Serine proteases that hydrolyze many proteins in addition to elastin. In Canis lupus familiaris (Dog), this protein is Chymotrypsin-like elastase family member 1 (CELA1).